Consider the following 330-residue polypeptide: Phenylalanine--tRNA ligase alpha subunit (330 aa).

E246 lines the Mg(2+) pocket.

Belongs to the class-II aminoacyl-tRNA synthetase family. Phe-tRNA synthetase alpha subunit type 1 subfamily. As to quaternary structure, tetramer of two alpha and two beta subunits. The cofactor is Mg(2+).

The protein resides in the cytoplasm. The enzyme catalyses tRNA(Phe) + L-phenylalanine + ATP = L-phenylalanyl-tRNA(Phe) + AMP + diphosphate + H(+). The polypeptide is Phenylalanine--tRNA ligase alpha subunit (Sulfurimonas denitrificans (strain ATCC 33889 / DSM 1251) (Thiomicrospira denitrificans (strain ATCC 33889 / DSM 1251))).